The chain runs to 824 residues: Leucine--tRNA ligase (824 aa).

Positions 40–50 match the 'HIGH' region motif; it reads PYPSGKIHMGH. The 'KMSKS' region motif lies at 580–584; sequence KMSKS. An ATP-binding site is contributed by lysine 583.

It belongs to the class-I aminoacyl-tRNA synthetase family.

It is found in the cytoplasm. The enzyme catalyses tRNA(Leu) + L-leucine + ATP = L-leucyl-tRNA(Leu) + AMP + diphosphate. This Alkaliphilus metalliredigens (strain QYMF) protein is Leucine--tRNA ligase.